Consider the following 125-residue polypeptide: Small ribosomal subunit protein uS13 (125 aa).

This sequence belongs to the universal ribosomal protein uS13 family. Part of the 30S ribosomal subunit. Forms a loose heterodimer with protein S19. Forms two bridges to the 50S subunit in the 70S ribosome.

Located at the top of the head of the 30S subunit, it contacts several helices of the 16S rRNA. In the 70S ribosome it contacts the 23S rRNA (bridge B1a) and protein L5 of the 50S subunit (bridge B1b), connecting the 2 subunits; these bridges are implicated in subunit movement. Contacts the tRNAs in the A and P-sites. The polypeptide is Small ribosomal subunit protein uS13 (Gluconobacter oxydans (strain 621H) (Gluconobacter suboxydans)).